The following is a 323-amino-acid chain: NADH-ubiquinone oxidoreductase chain 1 (323 aa).

The next 8 membrane-spanning stretches (helical) occupy residues 8 to 28 (VINP…LTLL), 74 to 94 (FLFL…WAPM), 105 to 125 (LGVL…LGSG), 145 to 165 (ISYE…TGGF), 176 to 196 (SIWL…STLA), 236 to 256 (ILLM…IPAF), 258 to 278 (ELTA…FLWV), and 298 to 318 (FLPL…ALAG).

This sequence belongs to the complex I subunit 1 family.

It is found in the mitochondrion inner membrane. The enzyme catalyses a ubiquinone + NADH + 5 H(+)(in) = a ubiquinol + NAD(+) + 4 H(+)(out). Functionally, core subunit of the mitochondrial membrane respiratory chain NADH dehydrogenase (Complex I) that is believed to belong to the minimal assembly required for catalysis. Complex I functions in the transfer of electrons from NADH to the respiratory chain. The immediate electron acceptor for the enzyme is believed to be ubiquinone. The polypeptide is NADH-ubiquinone oxidoreductase chain 1 (MT-ND1) (Oncorhynchus mykiss (Rainbow trout)).